Reading from the N-terminus, the 182-residue chain is Putative manganese efflux pump MntP (182 aa).

Helical transmembrane passes span 6 to 26 (LIPLIIMAFALGMDAFSVSLG), 37 to 57 (ILYIGMTIGIFHIIMPFIGMV), 71 to 91 (HFAGAILLIGLGFYIVYSTIL), 101 to 121 (IGISLFVFAFGVSIDSFSVGL), 131 to 151 (IITILLFGFVSMLLAWIGLLI), and 162 to 182 (YGEIVGGIILVGFGLYILFPI).

The protein belongs to the MntP (TC 9.B.29) family.

The protein resides in the cell membrane. Functionally, probably functions as a manganese efflux pump. This is Putative manganese efflux pump MntP from Bacillus cereus (strain B4264).